Consider the following 152-residue polypeptide: Prefoldin subunit alpha (152 aa).

Positions 110-152 (ETQEEVDELESESQELEQQAQQMQQQMQQQQMQQMQQSQGDEE) are disordered. Positions 111–124 (TQEEVDELESESQE) are enriched in acidic residues. Residues 125–152 (LEQQAQQMQQQMQQQQMQQMQQSQGDEE) are compositionally biased toward low complexity.

The protein belongs to the prefoldin alpha subunit family. As to quaternary structure, heterohexamer of two alpha and four beta subunits.

The protein localises to the cytoplasm. Its function is as follows. Molecular chaperone capable of stabilizing a range of proteins. Seems to fulfill an ATP-independent, HSP70-like function in archaeal de novo protein folding. The sequence is that of Prefoldin subunit alpha from Halorubrum lacusprofundi (strain ATCC 49239 / DSM 5036 / JCM 8891 / ACAM 34).